The sequence spans 186 residues: MACGATLKRSMEFEALMSPQSPKRRRCAPLPGSPATPSPQRCAIRPEMQQGQQQPLSQLGGDRRLTPEQILQNIKQEYTRYQRRRQLEGAFNQCEAGALNEVQASCSSLTAPSSPGSLVKKDQPTFSLRQVGILCERLLKDHEDKIREEYEQILNIKLAEQYESFVKFTHDQIMRRYGARPASYVS.

A disordered region spans residues 14-65; the sequence is EALMSPQSPKRRRCAPLPGSPATPSPQRCAIRPEMQQGQQQPLSQLGGDRRL. Low complexity predominate over residues 49–60; the sequence is QQGQQQPLSQLG. Residues 183–186 carry the SYVS motif motif; sequence SYVS.

Belongs to the akirin family.

The protein resides in the nucleus. Functionally, molecular adapter that acts as a bridge between proteins, and which is involved skeletal muscle development. Functions as a signal transducer for MSTN during skeletal muscle regeneration and myogenesis. This Xenopus laevis (African clawed frog) protein is Akirin-1A (akirin1-a).